A 74-amino-acid polypeptide reads, in one-letter code: NAD(P)H-quinone oxidoreductase subunit L (74 aa).

The next 2 membrane-spanning stretches (helical) occupy residues 5 to 25 (LIIA…VPAA) and 43 to 63 (AFMY…APLL).

The protein belongs to the complex I NdhL subunit family. As to quaternary structure, NDH-1 can be composed of about 15 different subunits; different subcomplexes with different compositions have been identified which probably have different functions.

The protein localises to the cellular thylakoid membrane. It catalyses the reaction a plastoquinone + NADH + (n+1) H(+)(in) = a plastoquinol + NAD(+) + n H(+)(out). It carries out the reaction a plastoquinone + NADPH + (n+1) H(+)(in) = a plastoquinol + NADP(+) + n H(+)(out). In terms of biological role, NDH-1 shuttles electrons from an unknown electron donor, via FMN and iron-sulfur (Fe-S) centers, to quinones in the respiratory and/or the photosynthetic chain. The immediate electron acceptor for the enzyme in this species is believed to be plastoquinone. Couples the redox reaction to proton translocation, and thus conserves the redox energy in a proton gradient. Cyanobacterial NDH-1 also plays a role in inorganic carbon-concentration. This is NAD(P)H-quinone oxidoreductase subunit L from Synechococcus elongatus (strain ATCC 33912 / PCC 7942 / FACHB-805) (Anacystis nidulans R2).